Here is a 141-residue protein sequence, read N- to C-terminus: Large ribosomal subunit protein uL11 (141 aa).

It belongs to the universal ribosomal protein uL11 family. In terms of assembly, part of the ribosomal stalk of the 50S ribosomal subunit. Interacts with L10 and the large rRNA to form the base of the stalk. L10 forms an elongated spine to which L12 dimers bind in a sequential fashion forming a multimeric L10(L12)X complex. In terms of processing, one or more lysine residues are methylated.

Functionally, forms part of the ribosomal stalk which helps the ribosome interact with GTP-bound translation factors. This chain is Large ribosomal subunit protein uL11, found in Thermomicrobium roseum (strain ATCC 27502 / DSM 5159 / P-2).